The primary structure comprises 111 residues: MVMVTQKIYIELKAFDSYLLDRSARSIILTAKRSGARVNGPIFFPRRVAKFIVNRSTHVDKKSREQFEIRTHKRLISLPKANSTIIQALMSLQLPAGVDVKVKVIGGSNNG.

The protein belongs to the universal ribosomal protein uS10 family. Part of the 30S ribosomal subunit.

In terms of biological role, involved in the binding of tRNA to the ribosomes. This Ehrlichia ruminantium (strain Welgevonden) protein is Small ribosomal subunit protein uS10.